We begin with the raw amino-acid sequence, 130 residues long: Small ribosomal subunit protein uS9 (130 aa).

It belongs to the universal ribosomal protein uS9 family.

This Paracidovorax citrulli (strain AAC00-1) (Acidovorax citrulli) protein is Small ribosomal subunit protein uS9.